We begin with the raw amino-acid sequence, 466 residues long: Adenosylhomocysteinase (466 aa).

Substrate is bound by residues Thr-57, Asp-132, and Glu-192. 193 to 195 (TTT) contributes to the NAD(+) binding site. Substrate contacts are provided by Lys-222 and Asp-226. NAD(+)-binding positions include Asn-227, 256–261 (GYGDVG), Glu-279, Asn-314, 335–337 (IGH), and Asn-380.

Belongs to the adenosylhomocysteinase family. NAD(+) serves as cofactor.

The protein localises to the cytoplasm. The enzyme catalyses S-adenosyl-L-homocysteine + H2O = L-homocysteine + adenosine. The protein operates within amino-acid biosynthesis; L-homocysteine biosynthesis; L-homocysteine from S-adenosyl-L-homocysteine: step 1/1. In terms of biological role, may play a key role in the regulation of the intracellular concentration of adenosylhomocysteine. In Rhizobium leguminosarum bv. trifolii (strain WSM2304), this protein is Adenosylhomocysteinase.